Consider the following 359-residue polypeptide: tRNA pseudouridine synthase B (359 aa).

Aspartate 63 (nucleophile) is an active-site residue.

It belongs to the pseudouridine synthase TruB family. Type 1 subfamily.

It catalyses the reaction uridine(55) in tRNA = pseudouridine(55) in tRNA. Functionally, responsible for synthesis of pseudouridine from uracil-55 in the psi GC loop of transfer RNAs. The protein is tRNA pseudouridine synthase B of Psychrobacter cryohalolentis (strain ATCC BAA-1226 / DSM 17306 / VKM B-2378 / K5).